We begin with the raw amino-acid sequence, 400 residues long: Aspartate aminotransferase (400 aa).

3 residues coordinate L-aspartate: Gly-37, Trp-126, and Asn-176. The residue at position 238 (Lys-238) is an N6-(pyridoxal phosphate)lysine. Position 367 (Arg-367) interacts with L-aspartate.

This sequence belongs to the class-I pyridoxal-phosphate-dependent aminotransferase family. In terms of assembly, homodimer. It depends on pyridoxal 5'-phosphate as a cofactor.

Its subcellular location is the cytoplasm. The enzyme catalyses L-aspartate + 2-oxoglutarate = oxaloacetate + L-glutamate. Its function is as follows. Catalyzes the reversible conversion of aspartate and 2-oxoglutarate to glutamate and oxaloacetate. Has very weak prephenate aminotransferase activity. This chain is Aspartate aminotransferase, found in Musicola paradisiaca (strain Ech703) (Dickeya paradisiaca).